A 142-amino-acid polypeptide reads, in one-letter code: Probable transport accessory protein MmpS5 (142 aa).

Residues 7–26 (RAWIPLLILVVVAIAGFTVQ) form a helical membrane-spanning segment.

The protein belongs to the MmpS family.

It localises to the cell membrane. The polypeptide is Probable transport accessory protein MmpS5 (mmpS5) (Mycobacterium bovis (strain ATCC BAA-935 / AF2122/97)).